Consider the following 132-residue polypeptide: Small ribosomal subunit protein uS8 (132 aa).

This sequence belongs to the universal ribosomal protein uS8 family. As to quaternary structure, part of the 30S ribosomal subunit. Contacts proteins S5 and S12.

Its function is as follows. One of the primary rRNA binding proteins, it binds directly to 16S rRNA central domain where it helps coordinate assembly of the platform of the 30S subunit. The protein is Small ribosomal subunit protein uS8 of Heliobacterium modesticaldum (strain ATCC 51547 / Ice1).